Consider the following 422-residue polypeptide: UDP-N-acetylglucosamine 1-carboxyvinyltransferase (422 aa).

22-23 (KN) is a binding site for phosphoenolpyruvate. Arg-93 provides a ligand contact to UDP-N-acetyl-alpha-D-glucosamine. The Proton donor role is filled by Cys-117. Cys-117 is modified (2-(S-cysteinyl)pyruvic acid O-phosphothioketal). Residues 122-126 (RPVDQ), Asp-305, and Ile-327 each bind UDP-N-acetyl-alpha-D-glucosamine.

The protein belongs to the EPSP synthase family. MurA subfamily.

It localises to the cytoplasm. The enzyme catalyses phosphoenolpyruvate + UDP-N-acetyl-alpha-D-glucosamine = UDP-N-acetyl-3-O-(1-carboxyvinyl)-alpha-D-glucosamine + phosphate. Its pathway is cell wall biogenesis; peptidoglycan biosynthesis. Functionally, cell wall formation. Adds enolpyruvyl to UDP-N-acetylglucosamine. The sequence is that of UDP-N-acetylglucosamine 1-carboxyvinyltransferase from Bordetella parapertussis (strain 12822 / ATCC BAA-587 / NCTC 13253).